The primary structure comprises 283 residues: Polyamine aminopropyltransferase (283 aa).

The PABS domain occupies 2–237 (ELWYTEEHTD…GHWLFGFASK (236 aa)). Gln-31 provides a ligand contact to S-methyl-5'-thioadenosine. Positions 62 and 86 each coordinate spermidine. S-methyl-5'-thioadenosine is bound by residues Glu-106 and 137 to 138 (DG). Residue Asp-155 is the Proton acceptor of the active site. Residue 155–158 (DSTD) participates in spermidine binding. S-methyl-5'-thioadenosine is bound at residue Pro-162.

The protein belongs to the spermidine/spermine synthase family. In terms of assembly, homodimer or homotetramer.

The protein localises to the cytoplasm. It catalyses the reaction S-adenosyl 3-(methylsulfanyl)propylamine + putrescine = S-methyl-5'-thioadenosine + spermidine + H(+). Its pathway is amine and polyamine biosynthesis; spermidine biosynthesis; spermidine from putrescine: step 1/1. Functionally, catalyzes the irreversible transfer of a propylamine group from the amino donor S-adenosylmethioninamine (decarboxy-AdoMet) to putrescine (1,4-diaminobutane) to yield spermidine. This Clostridium perfringens (strain ATCC 13124 / DSM 756 / JCM 1290 / NCIMB 6125 / NCTC 8237 / Type A) protein is Polyamine aminopropyltransferase.